The following is a 316-amino-acid chain: NADH-quinone oxidoreductase subunit H (316 aa).

8 helical membrane passes run 6–26 (PAVVIGILLSTVIVAAWLIWV), 74–94 (FVIAPAIVMVTMLLGFVVVPF), 98–118 (VGVIDFNFGLLYFFALSSLAV), 145–165 (ISYEVFMGLAAMGVVMLAGSF), 177–197 (GWYVLPQFAGFLAFLVAAVAE), 233–253 (YLGITLNSAILVTLFFGGWLG), 256–276 (FLPPLAWFILKTLVFILFFIL), and 296–316 (VMLPLTLANIVVTGAVGLSVP).

It belongs to the complex I subunit 1 family. NDH-1 is composed of 14 different subunits. Subunits NuoA, H, J, K, L, M, N constitute the membrane sector of the complex.

It localises to the cell inner membrane. It catalyses the reaction a quinone + NADH + 5 H(+)(in) = a quinol + NAD(+) + 4 H(+)(out). In terms of biological role, NDH-1 shuttles electrons from NADH, via FMN and iron-sulfur (Fe-S) centers, to quinones in the respiratory chain. The immediate electron acceptor for the enzyme in this species is believed to be ubiquinone. Couples the redox reaction to proton translocation (for every two electrons transferred, four hydrogen ions are translocated across the cytoplasmic membrane), and thus conserves the redox energy in a proton gradient. This subunit may bind ubiquinone. The chain is NADH-quinone oxidoreductase subunit H from Methylococcus capsulatus (strain ATCC 33009 / NCIMB 11132 / Bath).